A 237-amino-acid polypeptide reads, in one-letter code: Derlin-2 (237 aa).

Residues 1-20 (MNGVVAALEEMPPVTRFYTG) are Cytoplasmic-facing. The chain crosses the membrane as a helical span at residues 21–41 (ACVLLTTAVHLEFVTPFHLYF). Over 42–54 (NWELIIRKYQFWR) the chain is Lumenal. The helical transmembrane segment at 55–75 (LITSFCFFGSFGFSFLFNMIF) threads the bilayer. The Cytoplasmic segment spans residues 76-97 (TYRYCMMLEEGSFRGRRADFVY). The chain crosses the membrane as a helical span at residues 98-118 (MFLFGAVLMILSGIFVQILFL). Topologically, residues 119–166 (GQAFTIMLVYIWSRRNPMIQMNFFGVLTFTAPYLPWVLLLFSLLLGNN) are lumenal. The helical transmembrane segment at 167–187 (AVVDFMGIACGHIYFFLEDVF) threads the bilayer. Over 188 to 237 (PFQEHGKRFLKTPQWLVYLFDERRPEPLPEDERPGGFEWGDEQPEQEQHD) the chain is Cytoplasmic. Over residues 212-222 (PEPLPEDERPG) the composition is skewed to basic and acidic residues. The segment at 212–237 (PEPLPEDERPGGFEWGDEQPEQEQHD) is disordered. A compositionally biased stretch (acidic residues) spans 226 to 237 (WGDEQPEQEQHD).

Belongs to the derlin family.

Its subcellular location is the endoplasmic reticulum membrane. May be required for the degradation process of some specific misfolded endoplasmic reticulum (ER) luminal proteins. Participates in the transfer of misfolded proteins from the ER to the cytosol, where they are destroyed by the proteasome in a ubiquitin-dependent manner. Its precise function remains unclear, but its ability to complement der1 mutations in C.cerevisiae, suggests a similar function in the degradation of ER misfolded proteins. This chain is Derlin-2, found in Caenorhabditis elegans.